A 175-amino-acid chain; its full sequence is Ribosome maturation factor RimM (175 aa).

The 73-residue stretch at S94–L166 folds into the PRC barrel domain.

The protein belongs to the RimM family. Binds ribosomal protein uS19.

It is found in the cytoplasm. In terms of biological role, an accessory protein needed during the final step in the assembly of 30S ribosomal subunit, possibly for assembly of the head region. Essential for efficient processing of 16S rRNA. May be needed both before and after RbfA during the maturation of 16S rRNA. It has affinity for free ribosomal 30S subunits but not for 70S ribosomes. The protein is Ribosome maturation factor RimM of Renibacterium salmoninarum (strain ATCC 33209 / DSM 20767 / JCM 11484 / NBRC 15589 / NCIMB 2235).